Consider the following 93-residue polypeptide: Small ribosomal subunit protein uS19 (93 aa).

The disordered stretch occupies residues 73-93 (EFSPTRTFRGHVKDDRKSKRR). The span at 83–93 (HVKDDRKSKRR) shows a compositional bias: basic and acidic residues.

This sequence belongs to the universal ribosomal protein uS19 family.

Its function is as follows. Protein S19 forms a complex with S13 that binds strongly to the 16S ribosomal RNA. The protein is Small ribosomal subunit protein uS19 of Streptomyces coelicolor (strain ATCC BAA-471 / A3(2) / M145).